A 308-amino-acid chain; its full sequence is Aspartate carbamoyltransferase catalytic subunit (308 aa).

Carbamoyl phosphate is bound by residues R58 and T59. L-aspartate is bound at residue K86. Carbamoyl phosphate is bound by residues R108, H136, and Q139. L-aspartate-binding residues include R169 and R227. Carbamoyl phosphate is bound by residues G268 and P269.

The protein belongs to the aspartate/ornithine carbamoyltransferase superfamily. ATCase family. As to quaternary structure, heterododecamer (2C3:3R2) of six catalytic PyrB chains organized as two trimers (C3), and six regulatory PyrI chains organized as three dimers (R2).

The catalysed reaction is carbamoyl phosphate + L-aspartate = N-carbamoyl-L-aspartate + phosphate + H(+). The protein operates within pyrimidine metabolism; UMP biosynthesis via de novo pathway; (S)-dihydroorotate from bicarbonate: step 2/3. Functionally, catalyzes the condensation of carbamoyl phosphate and aspartate to form carbamoyl aspartate and inorganic phosphate, the committed step in the de novo pyrimidine nucleotide biosynthesis pathway. The chain is Aspartate carbamoyltransferase catalytic subunit from Chloroflexus aggregans (strain MD-66 / DSM 9485).